The sequence spans 145 residues: Acidic phospholipase A2 1 (145 aa).

Positions 1–21 (MYPAHLLVLLAVCVSLLGATA) are cleaved as a signal peptide. The propeptide occupies 22-27 (IPPLPL). Cystine bridges form between Cys-38–Cys-98, Cys-54–Cys-144, Cys-56–Cys-72, Cys-71–Cys-125, Cys-78–Cys-118, Cys-87–Cys-111, and Cys-105–Cys-116. The Ca(2+) site is built by Tyr-55, Gly-57, and Gly-59. His-75 is an active-site residue. Residue Asp-76 coordinates Ca(2+). The active site involves Asp-119.

The protein belongs to the phospholipase A2 family. Group I subfamily. D49 sub-subfamily. As to quaternary structure, monomer. Ca(2+) is required as a cofactor. Expressed by the venom gland.

It localises to the secreted. It catalyses the reaction a 1,2-diacyl-sn-glycero-3-phosphocholine + H2O = a 1-acyl-sn-glycero-3-phosphocholine + a fatty acid + H(+). PLA2 catalyzes the calcium-dependent hydrolysis of the 2-acyl groups in 3-sn-phosphoglycerides. This Laticauda semifasciata (Black-banded sea krait) protein is Acidic phospholipase A2 1.